The chain runs to 1322 residues: Putative DNA ligase 4 (1322 aa).

11 residues coordinate ATP: Glu-265, Lys-267, Arg-272, Arg-287, Glu-317, Phe-387, Glu-497, Lys-502, Arg-513, Lys-519, and Lys-521. Catalysis depends on Lys-267, which acts as the N6-AMP-lysine intermediate. Position 317 (Glu-317) interacts with Mg(2+). Mg(2+) is bound at residue Glu-497. 2 BRCT domains span residues 686–768 (LDVQ…PKFD) and 825–935 (ERFC…TYSL). 2 disordered regions span residues 945–1212 (IERS…SATC) and 1245–1310 (AEAK…KKVS). Positions 957-969 (DKLEENEKADTSH) are enriched in basic and acidic residues. Composition is skewed to basic residues over residues 970 to 979 (VKHAPRKRGR) and 994 to 1005 (PVRRTRARRGNQ). Composition is skewed to basic and acidic residues over residues 1007–1022 (AKID…HGET) and 1033–1047 (NISK…KDQV). Basic residues predominate over residues 1051 to 1063 (PVRRTRARRGKQH). Composition is skewed to basic and acidic residues over residues 1082–1104 (DDQR…RDQG), 1125–1161 (AKID…KDQE), and 1190–1204 (PKHE…RDTA). Residues 1261-1288 (SSYVAPVPQASASSASSSGVPAPHAGSS) are compositionally biased toward low complexity.

Belongs to the ATP-dependent DNA ligase family. It depends on Mg(2+) as a cofactor.

Its subcellular location is the nucleus. The catalysed reaction is ATP + (deoxyribonucleotide)n-3'-hydroxyl + 5'-phospho-(deoxyribonucleotide)m = (deoxyribonucleotide)n+m + AMP + diphosphate.. Its function is as follows. DNA ligase involved in DNA non-homologous end joining (NHEJ); required for double-strand break (DSB) repair. In Oryza sativa subsp. japonica (Rice), this protein is Putative DNA ligase 4 (LIG4).